Reading from the N-terminus, the 156-residue chain is Cyanate hydratase (156 aa).

Catalysis depends on residues arginine 96, glutamate 99, and serine 122.

The protein belongs to the cyanase family.

The enzyme catalyses cyanate + hydrogencarbonate + 3 H(+) = NH4(+) + 2 CO2. Its function is as follows. Catalyzes the reaction of cyanate with bicarbonate to produce ammonia and carbon dioxide. This Burkholderia vietnamiensis (strain G4 / LMG 22486) (Burkholderia cepacia (strain R1808)) protein is Cyanate hydratase.